A 1350-amino-acid chain; its full sequence is 1-phosphatidylinositol 4,5-bisphosphate phosphodiesterase gamma plc-3 (1350 aa).

Positions 1–40 (MQHGSLGPSSSSRKTTVTSTAGSVHLHHRSSNGFSTASRA) are disordered. Low complexity predominate over residues 9–20 (SSSSRKTTVTST). Polar residues predominate over residues 31–40 (SNGFSTASRA). Positions 352–503 (HDMSRPLSHY…LKKKIIVKHK (152 aa)) constitute a PI-PLC X-box domain. Catalysis depends on residues His-367 and His-419. Residues 570 to 594 (NPNDDTVSVSGDEEREEETPSGFGV) form a disordered region. SH2 domains lie at 605–704 (WFHG…TIPC) and 715–804 (WFSA…RFPV). Positions 832-890 (DKEVQARALRPYRGTADDELSFPANVIITVLRKEEGLWRGRYGSLTGWFPSAHVQEILP) constitute an SH3 domain. A PH domain is found at 855–960 (ANVIITVLRK…WQNNLFELTR (106 aa)). Residues 982–1092 (LSNLVVYCQA…CGYLLKPDYM (111 aa)) form the PI-PLC Y-box domain. The region spanning 1099 to 1220 (PTNTEKFATA…CGFRSVPLKN (122 aa)) is the C2 domain. The disordered stretch occupies residues 1270–1350 (GDSIPREMAP…KFSFGKSSKS (81 aa)). Positions 1283–1329 (TSATDRSLDSPTNSESRATLLSGQRGSQDSMDSAAETSSIASGTISS) are enriched in polar residues. Positions 1340–1350 (KKFSFGKSSKS) are enriched in low complexity.

Ca(2+) is required as a cofactor. Expressed in intestine, isthmus of the pharynx, proximal gonad sheath cells, spermatheca and uterine sheath cells. In males, expressed in the valve cell, the vas deferens and retractor and ventral protactor muscles.

It catalyses the reaction a 1,2-diacyl-sn-glycero-3-phospho-(1D-myo-inositol-4,5-bisphosphate) + H2O = 1D-myo-inositol 1,4,5-trisphosphate + a 1,2-diacyl-sn-glycerol + H(+). Functionally, mediates the production of the second messenger molecules diacylglycerol (DAG) and inositol 1,4,5-trisphosphate (IP3) which plays an important role in the regulation of intracellular signaling cascades. Regulates basal and ovulatory sheath cell contractions by controlling Ca(2+) oscillations via IP3-mediated activation of IP3 receptor itr-1. In intestinal epithelial cells, regulates Ca(2+) oscillations which control posterior body wall muscle contractions required for defecation by IP3-mediated activation of itr-1 and probably by activating TRPM channels gon-2 and gtl-1 by reducing PIP2 levels. By activating tpa-1 via DAG production, required for the expression of antimicrobial peptide nlp-29 in the epidermis in response to fungal infection or physical injury. By triggering Ca(2+) transient via IP3-mediated activation of IPR3 receptor itr-1 in ASH sensory neurons, involved in avoidance behavior in response to nose touch. Probably by regulating neuronal transmission in ALA neurons, mediates the decrease in pharyngeal pumping and locomotion during the quiescent state that precedes each larval molt, downstream of lin-3 and receptor let-23 and upstream of tpa-1 but not itr-1. During embryogenesis, may play an role in epidermal morphogenesis together with plc-1. Probably downstream of receptor daf-2, regulates male-sex muscle excitability in the absence of food. This Caenorhabditis elegans protein is 1-phosphatidylinositol 4,5-bisphosphate phosphodiesterase gamma plc-3.